The following is a 504-amino-acid chain: Protein phosphatase 1J (504 aa).

2 disordered regions span residues 1 to 102 (MLNR…RLPW) and 194 to 217 (PLCL…SPQS). A compositionally biased stretch (low complexity) spans 14–23 (SSSGTSSQRS). Threonine 41 carries the phosphothreonine modification. Over residues 59–73 (TAETPVSFSRPTFLQ) the composition is skewed to polar residues. Serine 65 and serine 75 each carry phosphoserine. In terms of domain architecture, PPM-type phosphatase spans 103–496 (STGYAEVINA…DDISVFVIPL (394 aa)). Low complexity predominate over residues 197–217 (LPSTPGTPGVSSPSQLVSPQS).

It belongs to the PP2C family. Interacts with UBE2I/UBC9.

The enzyme catalyses O-phospho-L-seryl-[protein] + H2O = L-seryl-[protein] + phosphate. It catalyses the reaction O-phospho-L-threonyl-[protein] + H2O = L-threonyl-[protein] + phosphate. The polypeptide is Protein phosphatase 1J (Ppm1j) (Rattus norvegicus (Rat)).